The sequence spans 297 residues: MVYLKGQIRKALSGFYYVYADGETYQTRARGNFRNRKITPLVGDEVLFESDNLTDGYVLEILPRRNELVRPPVANVDLGVVVMSMVSPNFSFNLLDRFLVSLEYKDIEPVIYLTKVDLLDEPQRQQVTEIKQIYEALGYAVIASEDVEATKELERFFPERLTVFMGQSGAGKSTLLNQISPELQLATAEISQSLGRGKHTTRHVELIPLYDGLVADTPGFSAIDFLEMEAVELPKQFPEFVAAASHCKFRECMHHKEPGCEVKRQVEAGTIATSRYENYLQFLMEIENRRPVYKKKS.

Positions 65–223 constitute a CP-type G domain; sequence RNELVRPPVA…VADTPGFSAI (159 aa). Residues 114–117 and 166–174 each bind GTP; these read TKVD and GQSGAGKST. Zn(2+) is bound by residues Cys247, Cys252, His254, and Cys260.

Belongs to the TRAFAC class YlqF/YawG GTPase family. RsgA subfamily. As to quaternary structure, monomer. Associates with 30S ribosomal subunit, binds 16S rRNA. It depends on Zn(2+) as a cofactor.

It localises to the cytoplasm. In terms of biological role, one of several proteins that assist in the late maturation steps of the functional core of the 30S ribosomal subunit. Helps release RbfA from mature subunits. May play a role in the assembly of ribosomal proteins into the subunit. Circularly permuted GTPase that catalyzes slow GTP hydrolysis, GTPase activity is stimulated by the 30S ribosomal subunit. This Enterococcus faecalis (strain ATCC 700802 / V583) protein is Small ribosomal subunit biogenesis GTPase RsgA.